Consider the following 198-residue polypeptide: HTH-type transcriptional regulator BetI (198 aa).

The region spanning 8 to 68 is the HTH tetR-type domain; that stretch reads PLRRRELIDA…ATMRHLLREL (61 aa). Positions 31–50 form a DNA-binding region, H-T-H motif; it reads TVAQIAHEAGVSPALAHHYF.

The protein operates within amine and polyamine biosynthesis; betaine biosynthesis via choline pathway [regulation]. Repressor involved in the biosynthesis of the osmoprotectant glycine betaine. It represses transcription of the choline transporter BetT and the genes of BetAB involved in the synthesis of glycine betaine. This Brucella canis (strain ATCC 23365 / NCTC 10854 / RM-666) protein is HTH-type transcriptional regulator BetI.